We begin with the raw amino-acid sequence, 2224 residues long: MVKSLVAKLSTASSNLSLASTFGGGSGAAEETNYAKHRNDPGRFFGDGVQFKAKLIGILEVGEARGDRMCQEALQDLKMAIRAAGEHKQRITIHVTIDGLRLRDEKTGDSLYHHPVHKISFIAQDMTDSRAFGYIFGSPDSGHRFFGIKTDKAASQVVLAMRDLFQVVFELKKKEIEMARQQIQGKSLHDHSSQLASLSSLKSSGLGGMGLGHSDLASGGISSGHALTLLGSSLSTTNGTSRLGVSLDVAKASGSAAKEVSPESVADLVDLEQELTSLQRGISQMERITPNEPTTSSTGGAGHPSLAKSASEDDPFGDSFIYVPSYSILPPPPDSGRNRHKPPNKTPDAVTSLDAMLSPPPGTSSSHGSASAGLQAADNDDDNWLQELDQQNDVFDTSKVVSSSGLGSVLAMAPLASSESTATPTQQLTEVAAGSGPLADLDIGLSTALGNEEQTSTILSLDAFTDLDPLGTGRTRPYVDKKYFFQELKNPPKKLLKELSSGSQAGLGLGLSLGQLDGLFPEDSTTISTTTTTATNITAGNPQQNSANTLTSTASTAASLGQLLSTVALNPDPLPAPISIPTSISHSITPSAELKLLLGHVTNPPNPTGHYYTTEPPTLNSLENPHPPADPVLLPRDTDPFSPTRKKSDPDPFQESDLFAKLDAFEFEAPPAVPAPSIPNLATETKANVFNGPLQVQLPPEKELQLQQPPSTVRNRPTASVSALPSGGALDVISSISNKKMPHLFGQARSFGKSGSDIGSSVNMRRLQESDSLSETEAAPEPPPRPDSTPYSEPPPLPPKKQFSDLVIRPSPANTTQPPTSGRYEYLNSNVTARRTASSVDAPPIPLPSRRVGRSDGCFPGPGRPRKPGHTEDDYLAPLGAPPPLLPPPSQGSSARARPQRQASLGRPQDIYENKAEILQAQAQAQAQAPEVAPSSNTLAPDITLTQLLTLGMDDLAIKLNVPASKLSTMTLVQLTAYLSEYLSSEKSQVHSQERRSSPANTAPAPASTAAVFKVNFDQQTSFVAKFDDTFGEDEPVMPSGSSDSTFVANFANFNDAPTPVPTVSPVVATVPSADRYAVFREIIDQELQQQQQETDLMGDLTPPPVDETQAKEISEGLEVNNVGAELPIDALDVKPAPKIDTKITEVVAQAKDRYAALRDIILVENLFDKPAIATDTQPEKEKDLLQDFPEFSDEFNEDHDLRQIMDHQNVQTHARDRHGLVDSRGFPTEPSSSALTVGDYDEDEDADAGGESSLDSNEKDAEPVSGQDQYEKLSTSTQQLDAAAPALEDVQQLQQQSLPPKQDQKFLSILTAPGGGTKDDIEIDELMHRAISNLSLDSRDRVSPATSSAAPSRGAPGLHTPSQFNDVSTSPIPLQKPGMGPSPVPSQLSAVSQLIDTATKQMMGDKDREKQSWATFDSPKAKGKARLTLPPPPPPASNTSQPDTVESPCSSDPRDDGWSKQQRRWAKKERQQTSSSSRDLSPWDDETPEYLKRRQLAAAQMAHPHQPPMQAPPQHTDRHGYYMRHARRMNSCDEDYDYDGEFVARRDQPQHQQQQRKFKHGLSRSRDNFELESPSWYHHPAHHTWSPQEIEQVRVRSFDRTAYERSSYGPPPPIYDKRGQLRGKYRGDHRDRERERDRDREYRDYARPSYDFDYENVYEERGGRSPLAYKPGRGGGDYLYDRERDRDRERDRKSFDRESLESYESATRRRRSFGSGNDVYGSLDSRDDYRGDRERDRERDREQMKTRSLRKPTTTSGKLRISGDIDYEQDSEQDFQQRSGVRSLQRPNQLGGDVVLPSNAVVGPQRLRKSSGSSPWDGEEPALPGQKSWKRPASAAETERRLAESRRAVALGQTPSDGEKERRFRKKTRARSAKDLATVGAPSASTSAPSRSSYGRGIRDNYDYICPGQRNDDDDDDDEDYVDDEPPTDEDKFERLNRRRHEMHQRMLESERRQMERHQPPSLAKLPGQNRTRGVVANSDYGFVDSYEQTPTPTPRSNASSTGPGGLMMSGGESSAGVTSSKFNFDDGFESDFNQSSPPPAPAGTASSCNSTPAGPVSANANNGGSKSLFRFSNDFSDREKREQFEMDTPPTSTPPITQKLRFDDNVKVSQFDDAAFEDDFAKASFDFEKEQAGSATAGAGGSGAMSRKQNMRTSKLQQRQELIKKSESVNIFAKKQEDPFEDDEFFKSPDQEQAMDQHNDDTEGGKFQWSEDANFAKFDENM.

Residues 45–197 (FGDGVQFKAK…LHDHSSQLAS (153 aa)) enclose the PID domain. The residue at position 112 (Y112) is a Phosphotyrosine; by ABL. The interval 281–377 (GISQMERITP…GSASAGLQAA (97 aa)) is disordered. Over residues 363 to 377 (TSSSHGSASAGLQAA) the composition is skewed to low complexity. Y483 is modified (phosphotyrosine; by ABL). Disordered stretches follow at residues 607 to 654 (PTGH…DPFQ), 704 to 724 (LQLQ…VSAL), and 766 to 906 (RLQE…ASLG). Residues 711–723 (STVRNRPTASVSA) show a composition bias toward polar residues. Residues 780–799 (PEPPPRPDSTPYSEPPPLPP) show a composition bias toward pro residues. A compositionally biased stretch (polar residues) spans 827–839 (LNSNVTARRTASS). Over residues 880 to 890 (GAPPPLLPPPS) the composition is skewed to pro residues. Phosphoserine is present on S998. Disordered stretches follow at residues 1212–1321 (QTHA…TKDD), 1334–1519 (NLSL…HTDR), 1545–1566 (ARRD…LSRS), 1603–2100 (AYER…PITQ), 2134–2164 (AGSA…RQEL), and 2177–2224 (KQED…DENM). Positions 1240 to 1249 (DYDEDEDADA) are enriched in acidic residues. Residues 1267–1281 (GQDQYEKLSTSTQQL) show a composition bias toward polar residues. Positions 1292-1302 (QQLQQQSLPPK) are enriched in low complexity. Phosphoserine occurs at positions 1336, 1339, 1344, and 1348. Polar residues-rich tracts occupy residues 1361–1373 (TPSQ…TSPI), 1386–1401 (PSQL…TATK), and 1438–1451 (SNTS…SPCS). Over residues 1555–1564 (QQRKFKHGLS) the composition is skewed to basic residues. Phosphotyrosine; by ABL is present on residues Y1604 and Y1609. Basic and acidic residues predominate over residues 1616–1647 (YDKRGQLRGKYRGDHRDRERERDRDREYRDYA). Residues 1631–1642 (RDRERERDRDRE) form an Alternate Arg and acidic residues repeat. Residues 1631-1743 (RDRERERDRD…RERDRERDRE (113 aa)) are repeat-rich region. Phosphotyrosine; by ABL is present on residues Y1643, Y1646, Y1655, and Y1681. The span at 1680–1701 (LYDRERDRDRERDRKSFDRESL) shows a compositional bias: basic and acidic residues. The stretch at 1682-1692 (DRERDRDRERD) is one Alternate Arg and acidic residues repeat. Residues S1700, S1713, and S1716 each carry the phosphoserine modification. Over residues 1725–1746 (DSRDDYRGDRERDRERDREQMK) the composition is skewed to basic and acidic residues. An Alternate Arg and acidic residues repeat occupies 1733 to 1743 (DRERDRERDRE). Y1768 bears the Phosphotyrosine; by ABL mark. Polar residues predominate over residues 1775–1789 (DFQQRSGVRSLQRPN). Phosphoserine occurs at positions 1811, 1812, 1814, and 1815. Residues 1838–1848 (ETERRLAESRR) show a composition bias toward basic and acidic residues. Residues 1882 to 1894 (APSASTSAPSRSS) are compositionally biased toward low complexity. A Phosphotyrosine; by ABL modification is found at Y1905. A compositionally biased stretch (acidic residues) spans 1913–1929 (DDDDDDDEDYVDDEPPT). Residues 1945-1960 (HQRMLESERRQMERHQ) are compositionally biased toward basic and acidic residues. 3 stretches are compositionally biased toward polar residues: residues 1988 to 2003 (YEQT…ASST), 2013 to 2024 (GESSAGVTSSKF), and 2050 to 2067 (CNST…NGGS). Residue S2074 is modified to Phosphoserine. Residues 2077–2086 (FSDREKREQF) show a composition bias toward basic and acidic residues. Over residues 2149 to 2162 (RKQNMRTSKLQQRQ) the composition is skewed to polar residues. The span at 2187 to 2206 (FFKSPDQEQAMDQHNDDTEG) shows a compositional bias: basic and acidic residues.

As to quaternary structure, binds the SH3 domains of drk via the Pro-rich domain. When phosphorylated, can interact with the SH2 domains of drk. Binds sev via the phosphotyrosine interaction domain (PID). Probably phosphorylated by the Abl tyrosine kinase. Phosphorylated on tyrosine residues in response to sevenless activation. Uniformly expressed in the embryo from blastoderm through gastrulation. Highly expressed in the mesoderm and CNS during germ-band retraction. CNS expression is later localized to axon bundles. Detected in the embryonic PNS and body wall muscles. Expressed in the eye at the morphogenetic furrow and in developing photoreceptor cells posterior to the furrow.

It is found in the cytoplasm. Functionally, together with Abl, involved in embryonic neural development. May have a role in eye development. Acts as an adapter protein for SH2-domain containing proteins during sevenless (sev) signaling. This Drosophila melanogaster (Fruit fly) protein is Protein disabled (Dab).